Reading from the N-terminus, the 46-residue chain is Protein krueppel (46 aa).

3 consecutive C2H2-type zinc fingers follow at residues 1 to 4 (MRLH), 10 to 32 (YQCLHCDRHFVQVANLRRHLRVH), and 38 to 46 (YACEICPSR).

It belongs to the krueppel C2H2-type zinc-finger protein family.

Its subcellular location is the nucleus. In terms of biological role, krueppel is a gap class segmentation protein. In Pholcus phalangioides (Longbodied cellar spider), this protein is Protein krueppel (Kr).